A 42-amino-acid polypeptide reads, in one-letter code: Potassium channel toxin gamma-KTx 1.3 (42 aa).

Disulfide bonds link C5-C23, C11-C34, C20-C39, and C24-C41.

Belongs to the ergtoxin family. Gamma-KTx 1 subfamily. In terms of tissue distribution, expressed by the venom gland.

Its subcellular location is the secreted. Its function is as follows. Blocks Kv11/ERG potassium channels. The chain is Potassium channel toxin gamma-KTx 1.3 from Centruroides gracilis (Slenderbrown scorpion).